The following is a 624-amino-acid chain: MVASEIKSPVSVPETPGSSSVHHRKQLSVFFIESDNRRLALGRGYTGGTTPVNIHGKPIANLSKTGGWIAAFFIFGNEMAERMAYFGLSVNMVAFMFYVMHRPFESSSNAVNNFLGISQASSVLGGFLADAYLGRYWTIAIFTTMYLVGLIGITLGASLKMFVPDQSNCGQLSLLLGNCEEAKSWQMLYLYTVLYITGFGAAGIRPCVSSFGADQFDEKSKDYKTHLDRFFNFFYLSVTLGAIIAFTLVVYVQMELGWGMAFGTLAVAMGISNALFFAGTPLYRHRLPGGSPLTRVAQVLVAAFRKRNAAFTSSEFIGLYEVPGLKSAINGSRKIPHSNDFIWLDKAALELKEDGLEPSPWKLCTVTQVEEVKILIRLIPIPTCTIMLSLVLTEYLTLSVQQAYTLNTHIQHLKLPVTCMPVFPGLSIFLILSLYYSVFVPITRRITGNPHGASQLQRVGIGLAVSIISVAWAGLFENYRRHYAIQNGFEFNFLTQMPDLTAYWLLIQYCLIGIAEVFCIVGLLEFLYEEAPDAMKSIGSAYAALAGGLGCFAATILNNIVKAATRDSDGKSWLSQNINTGRFDCLYWLLTLLSFLNFCVFLWSAHRYKYRAIESEEDKSSAVL.

The interval 1–20 (MVASEIKSPVSVPETPGSSS) is disordered. The next 2 helical transmembrane spans lie at 83–100 (MAYF…FYVM) and 114–134 (FLGI…AYLG). T138 carries the post-translational modification Phosphothreonine. 10 helical membrane-spanning segments follow: residues 139–159 (IAIF…GASL), 184–204 (SWQM…AAGI), 230–250 (FFNF…TLVV), 258–278 (WGMA…LFFA), 378–398 (LIPI…YLTL), 422–442 (VFPG…FVPI), 459–479 (VGIG…FENY), 504–524 (WLLI…VGLL), 537–557 (SIGS…ATIL), and 585–605 (CLYW…LWSA).

This sequence belongs to the major facilitator superfamily. Proton-dependent oligopeptide transporter (POT/PTR) (TC 2.A.17) family. Expressed in flower and siliques.

The protein resides in the membrane. The polypeptide is Protein NRT1/ PTR FAMILY 6.1 (NPF6.1) (Arabidopsis thaliana (Mouse-ear cress)).